A 139-amino-acid polypeptide reads, in one-letter code: D-ribose pyranase (139 aa).

H20 serves as the catalytic Proton donor. Substrate-binding positions include D28, H106, and 128–130 (YAN).

It belongs to the RbsD / FucU family. RbsD subfamily. Homodecamer.

The protein resides in the cytoplasm. It carries out the reaction beta-D-ribopyranose = beta-D-ribofuranose. Its pathway is carbohydrate metabolism; D-ribose degradation; D-ribose 5-phosphate from beta-D-ribopyranose: step 1/2. Functionally, catalyzes the interconversion of beta-pyran and beta-furan forms of D-ribose. This chain is D-ribose pyranase, found in Vibrio campbellii (strain ATCC BAA-1116).